The sequence spans 400 residues: Argininosuccinate synthase (400 aa).

Residues 10–18 and Ala38 each bind ATP; that span reads AYSGGVDTS. Residue Tyr89 coordinates L-citrulline. Gly119 contributes to the ATP binding site. L-aspartate is bound by residues Thr121, Asn125, and Asp126. Residue Asn125 participates in L-citrulline binding. Positions 129, 177, 262, and 274 each coordinate L-citrulline.

The protein belongs to the argininosuccinate synthase family. Type 1 subfamily. As to quaternary structure, homotetramer.

It localises to the cytoplasm. The enzyme catalyses L-citrulline + L-aspartate + ATP = 2-(N(omega)-L-arginino)succinate + AMP + diphosphate + H(+). The protein operates within amino-acid biosynthesis; L-arginine biosynthesis; L-arginine from L-ornithine and carbamoyl phosphate: step 2/3. The protein is Argininosuccinate synthase of Trichodesmium erythraeum (strain IMS101).